Here is a 530-residue protein sequence, read N- to C-terminus: Type 2 DNA topoisomerase 6 subunit B (530 aa).

ATP is bound by residues Asn-42, Asp-76, 96 to 98 (SSK), 107 to 113 (MYGLGVK), and Lys-427.

This sequence belongs to the TOP6B family. Homodimer. Heterotetramer of two Top6A and two Top6B chains.

It carries out the reaction ATP-dependent breakage, passage and rejoining of double-stranded DNA.. With respect to regulation, not inhibited by the DNA gyrase inhibitor novobiocin, instead inhibited by eukaryotic topoisomerase inhibitors such as m- and o-amsacrine, ellipticine, and the quinolone CP-115,953. Radicicol inhibits the ATPase activity. In terms of biological role, relaxes both positive and negative supercoils and exhibits a strong decatenase and unknotting activity; it cannot introduce DNA supercoils. ATP is absolutely required for DNA cleavage; the nonhydrolyzable analog AMP-PNP generates nicked or linear products from a supercoiled dsDNA substrate. Generates staggered two-nucleotide long 5' overhangs. The enzyme is covalently attached transiently to the 5'-ends of the cleaved strands. The protein is Type 2 DNA topoisomerase 6 subunit B of Saccharolobus shibatae (strain ATCC 51178 / DSM 5389 / JCM 8931 / NBRC 15437 / B12) (Sulfolobus shibatae).